The following is a 212-amino-acid chain: Adenylate kinase (212 aa).

14-19 (GSGKGT) serves as a coordination point for ATP. The NMP stretch occupies residues 34-63 (STGDLFRKKISEDSRFAAQIQNYLSSGSYV). AMP is bound by residues Thr-35, Arg-40, 61–63 (SYV), 89–92 (GYPR), and Gln-96. The interval 126–163 (QRLFCQKCQKSYNLLLAKPKNGLKCDLDNTDLITRNDD) is LID. Residue Arg-127 participates in ATP binding. Residues Cys-130 and Cys-133 each coordinate Zn(2+). ATP is bound at residue 136-137 (SY). Zn(2+) is bound by residues Cys-150 and Asp-153. AMP contacts are provided by Arg-160 and Arg-171. Gln-199 provides a ligand contact to ATP.

Belongs to the adenylate kinase family. In terms of assembly, monomer.

Its subcellular location is the cytoplasm. It carries out the reaction AMP + ATP = 2 ADP. Its pathway is purine metabolism; AMP biosynthesis via salvage pathway; AMP from ADP: step 1/1. Catalyzes the reversible transfer of the terminal phosphate group between ATP and AMP. Plays an important role in cellular energy homeostasis and in adenine nucleotide metabolism. The sequence is that of Adenylate kinase from Mesomycoplasma hyopneumoniae (strain 232) (Mycoplasma hyopneumoniae).